The chain runs to 94 residues: Cell division protein FtsB (94 aa).

Residues 1 to 3 (MRT) lie on the Cytoplasmic side of the membrane. Residues 4–21 (FAIFLLIALGWLQYTLWF) traverse the membrane as a helical segment. Residues 22 to 94 (GKNGMSDYAQ…YRIIDENSEG (73 aa)) are Periplasmic-facing. Positions 33–71 (SNDVALQEEVNQGLRNRNEQMFAEIDDLKKGSEAIEERA) form a coiled coil.

It belongs to the FtsB family. Part of a complex composed of FtsB, FtsL and FtsQ.

It localises to the cell inner membrane. Functionally, essential cell division protein. May link together the upstream cell division proteins, which are predominantly cytoplasmic, with the downstream cell division proteins, which are predominantly periplasmic. This is Cell division protein FtsB from Aliivibrio fischeri (strain ATCC 700601 / ES114) (Vibrio fischeri).